Reading from the N-terminus, the 464-residue chain is Endo-1,4-beta-xylanase A (464 aa).

The first 33 residues, 1 to 33 (MFRHHPTRGRRTAGLLAAALATLSAGLTAVAPA), serve as a signal peptide directing secretion. The region spanning 40-349 (TATLGELAEA…KPAYHAIAAA (310 aa)) is the GH10 domain. The active-site Proton donor is the glutamate 166. Glutamate 271 (nucleophile) is an active-site residue. Residues 354–457 (SPAPGGNCTA…TPADVTCTPG (104 aa)) enclose the CBM2 domain.

It belongs to the glycosyl hydrolase 10 (cellulase F) family. Requires Does not require any standard metal (Mg(2+), Mn2(+), Ca(2+)). as cofactor.

The catalysed reaction is Endohydrolysis of (1-&gt;4)-beta-D-xylosidic linkages in xylans.. The protein operates within glycan degradation; xylan degradation. Completely inhibited by Hg(2+), unaffected by EDTA. Functionally, contributes to hydrolysis of hemicellulose, the major component of plant cell-walls. Hydrolyzes xylan to xylose and xylobiose. The protein is Endo-1,4-beta-xylanase A (xynAS9) of Streptomyces sp.